The sequence spans 785 residues: Phenylalanine--tRNA ligase beta subunit (785 aa).

The region spanning 38-150 is the tRNA-binding domain; it reads CEHLKTFVIA…NTYNVGDTFF (113 aa). Residues 394–470 form the B5 domain; it reads VDNIELNFFP…RLYGYDKICE (77 aa). Asp-448, Asp-454, Glu-457, and Glu-458 together coordinate Mg(2+). One can recognise an FDX-ACB domain in the interval 690–783; sequence SCYQSVKRDF…VAEKLGGVLR (94 aa).

The protein belongs to the phenylalanyl-tRNA synthetase beta subunit family. Type 1 subfamily. As to quaternary structure, tetramer of two alpha and two beta subunits. Mg(2+) is required as a cofactor.

It is found in the cytoplasm. It carries out the reaction tRNA(Phe) + L-phenylalanine + ATP = L-phenylalanyl-tRNA(Phe) + AMP + diphosphate + H(+). In Ehrlichia canis (strain Jake), this protein is Phenylalanine--tRNA ligase beta subunit.